A 153-amino-acid polypeptide reads, in one-letter code: Endoribonuclease YbeY (153 aa).

Residues His115, His119, and His125 each coordinate Zn(2+).

This sequence belongs to the endoribonuclease YbeY family. The cofactor is Zn(2+).

The protein localises to the cytoplasm. In terms of biological role, single strand-specific metallo-endoribonuclease involved in late-stage 70S ribosome quality control and in maturation of the 3' terminus of the 16S rRNA. This is Endoribonuclease YbeY from Blochmanniella floridana.